A 360-amino-acid polypeptide reads, in one-letter code: Uroporphyrinogen decarboxylase (360 aa).

Residues 27 to 31, Phe-46, Asp-77, Tyr-154, Thr-209, and His-327 contribute to the substrate site; that span reads RQSGR.

The protein belongs to the uroporphyrinogen decarboxylase family. In terms of assembly, homodimer.

Its subcellular location is the cytoplasm. The catalysed reaction is uroporphyrinogen III + 4 H(+) = coproporphyrinogen III + 4 CO2. The protein operates within porphyrin-containing compound metabolism; protoporphyrin-IX biosynthesis; coproporphyrinogen-III from 5-aminolevulinate: step 4/4. Catalyzes the decarboxylation of four acetate groups of uroporphyrinogen-III to yield coproporphyrinogen-III. This chain is Uroporphyrinogen decarboxylase, found in Wigglesworthia glossinidia brevipalpis.